The following is a 351-amino-acid chain: Putative ABC transporter permease protein MJ0876 (351 aa).

9 helical membrane-spanning segments follow: residues 4 to 24 (VGIL…ALYL), 59 to 79 (LPPI…GLML), 99 to 119 (VLMV…FEIF), 124 to 144 (ILVA…IIAL), 152 to 172 (VIIV…YLIA), 196 to 216 (GDVI…MFLI), 249 to 269 (FITG…IIAP), 284 to 304 (LVPA…ILSL), and 322 to 342 (PLPI…YLVY).

It belongs to the binding-protein-dependent transport system permease family. FecCD subfamily.

Its subcellular location is the cell membrane. Probably part of a binding-protein-dependent transport system. Probably responsible for the translocation of the substrate across the membrane. The sequence is that of Putative ABC transporter permease protein MJ0876 from Methanocaldococcus jannaschii (strain ATCC 43067 / DSM 2661 / JAL-1 / JCM 10045 / NBRC 100440) (Methanococcus jannaschii).